The chain runs to 148 residues: Ubiquitin-conjugating enzyme E2 10 (148 aa).

The 147-residue stretch at 1–147 (MASKRILKEL…ARSWTQKYAM (147 aa)) folds into the UBC core domain. C85 (glycyl thioester intermediate) is an active-site residue.

The protein belongs to the ubiquitin-conjugating enzyme family. Interacts with CHIP and the E3 ubiquitin ligase BB. Associates with the E3 ubiquitin ligase JMJ24. As to expression, ubiquitously expressed with the highest levels in rosette leaves, roots and petals.

It carries out the reaction S-ubiquitinyl-[E1 ubiquitin-activating enzyme]-L-cysteine + [E2 ubiquitin-conjugating enzyme]-L-cysteine = [E1 ubiquitin-activating enzyme]-L-cysteine + S-ubiquitinyl-[E2 ubiquitin-conjugating enzyme]-L-cysteine.. The protein operates within protein modification; protein ubiquitination. Accepts the ubiquitin from the E1 complex and catalyzes its covalent attachment to other proteins. Mediates the selective degradation of short-lived and abnormal proteins. In Arabidopsis thaliana (Mouse-ear cress), this protein is Ubiquitin-conjugating enzyme E2 10.